We begin with the raw amino-acid sequence, 174 residues long: Calcium-binding protein F (174 aa).

4 EF-hand domains span residues 9–44, 60–83, 92–127, and 133–162; these read KIFQ…KMDG, VDMD…EAKK, AALA…NGHT, and DQVL…RRID. 5 residues coordinate Ca(2+): aspartate 22, asparagine 24, aspartate 26, serine 28, and aspartate 33. The Ca(2+) site is built by aspartate 105, aspartate 107, aspartate 109, lysine 111, glutamate 116, aspartate 140, aspartate 142, aspartate 144, cysteine 146, and glutamate 151.

This Dictyostelium discoideum (Social amoeba) protein is Calcium-binding protein F (cbpF).